A 2136-amino-acid polypeptide reads, in one-letter code: Methylcytosine dioxygenase TET1 (2136 aa).

2 stretches are compositionally biased toward basic residues: residues 1–12 and 20–31; these read MSRSRHARPSRL and KKKKNSQLRKTT. The interval 1 to 47 is disordered; that stretch reads MSRSRHARPSRLVRKEDVNKKKKNSQLRKTTKGANKNVASVKTLSPG. Positions 32–43 are enriched in polar residues; sequence KGANKNVASVKT. Residues 528 to 674 form a sufficient for binding to genomic CpG islands region; sequence LGIAQLSQAG…NGPKSESMDY (147 aa). A CXXC-type zinc finger spans residues 584-625; sequence EKKKRKRCGVCEPCQQKTNCGECTYCKNRKNSHQICKKRKCE. The Zn(2+) site is built by Cys-591, Cys-594, Cys-597, Cys-603, Cys-606, Cys-609, Cys-619, and Cys-624. Basic and acidic residues-rich tracts occupy residues 712-724, 732-743, and 849-869; these read QNKK…HVKG, EAEKSKNSEVDK, and IHNE…EPKD. Disordered stretches follow at residues 712–746, 849–876, 899–923, and 1119–1169; these read QNKK…KKRT, IHNE…VQPS, QLSE…EQRT, and EKGT…VSYQ. Ser-871 bears the Phosphoserine mark. The span at 901-911 shows a compositional bias: low complexity; that stretch reads SEAPSENSSPS. Residues 1119–1139 are compositionally biased toward polar residues; the sequence is EKGTIQQKPPSSVHNNHGSSL. Over residues 1146–1163 the composition is skewed to basic residues; it reads TQKKTKSTPSRDRRKKKP. Positions 1422, 1424, 1482, 1508, and 1510 each coordinate Zn(2+). Residue Arg-1551 coordinates 2-oxoglutarate. Zn(2+)-binding residues include Cys-1561, Cys-1563, Cys-1579, and Cys-1588. An interaction with DNA region spans residues 1580-1593; that stretch reads SWSMYFNGCKFGRS. Lys-1589 is covalently cross-linked (Glycyl lysine isopeptide (Lys-Gly) (interchain with G-Cter in ubiquitin)). Cys-1648 contributes to the Zn(2+) binding site. 2-oxoglutarate is bound at residue Cys-1664. Residue His-1670 participates in Zn(2+) binding. His-1672 and Asp-1674 together coordinate Fe cation. Asn-1677 is a binding site for substrate. His-1706 provides a ligand contact to 2-oxoglutarate. Disordered regions lie at residues 1774–1897 and 1919–1984; these read EKKP…AAAD and EPLI…SPAE. The span at 1786 to 1800 shows a compositional bias: low complexity; it reads NSTTTNNSKPSSLPT. 2 stretches are compositionally biased toward polar residues: residues 1824–1833 and 1937–1953; these read SSDNTKTYSL and HQPN…QDLA. A compositionally biased stretch (acidic residues) spans 1957–1976; the sequence is MEEDEQHSEADEPPSDEPLS. His-2028 contacts Fe cation. 2043–2045 contributes to the 2-oxoglutarate binding site; it reads RLS. 2049–2051 is a binding site for substrate; that stretch reads YQH. His-2059 is a Zn(2+) binding site. Over residues 2074–2087 the composition is skewed to basic and acidic residues; the sequence is KNKKMKASEQKDQA. Residues 2074–2100 form a disordered region; sequence KNKKMKASEQKDQAANEGPEQSSEVNE.

It belongs to the TET family. As to quaternary structure, interacts with SIN3A; recruits the transcriptional corepressor SIN3A to gene promoters. Interacts with HCFC1. Interacts (via C-terminus) with OGT. Found in a complex composed of at least SINHCAF, SIN3A, HDAC1, SAP30, RBBP4, OGT and TET1. Interacts with QSER1. Interacts with NONO (via DNA-binding domain); this interaction recruits TET1 to genomic loci. Interacts with FOXA2; this interaction may recruit TET1 to specific enhancers to preserve their unmethylated status and hence allowing gene expression. Interacts with RNF2. Directly interacts (via C-terminus) with the DCAF1 component of the CRL4(VprBP) E3 ubiquitin-protein ligase complex. In terms of assembly, interacts with UHRF1; this interaction induces the recruitment of TET1 to replicating heterochromatin. Interacts with DCAF1. Fe(2+) is required as a cofactor. It depends on Zn(2+) as a cofactor. In terms of processing, glycosylated. Interaction with OGT leads to GlcNAcylation. Monoubiquitinated at Lys-1589 by the DCX (DDB1-CUL4-X-box) E3 ubiquitin-protein ligase complex called CRL4(VprBP) or CUL4A-RBX1-DDB1-DCAF1/VPRBP complex; this modification promotes binding to DNA. In terms of tissue distribution, expressed in fetal heart, lung and brain, and in adult skeletal muscle, thymus and ovary. Not detected in adult heart, lung or brain. Up-regulated in glioblastoma cells (at protein level). Expressed in embryonic stem cells (at protein level).

The protein localises to the nucleus. It is found in the chromosome. It carries out the reaction a 5-methyl-2'-deoxycytidine in DNA + 2-oxoglutarate + O2 = a 5-hydroxymethyl-2'-deoxycytidine in DNA + succinate + CO2. The enzyme catalyses a 5-hydroxymethyl-2'-deoxycytidine in DNA + 2-oxoglutarate + O2 = a 5-formyl-2'-deoxycytidine in DNA + succinate + CO2 + H2O. The catalysed reaction is a 5-formyl-2'-deoxycytidine in DNA + 2-oxoglutarate + O2 = a 5-carboxyl-2'-deoxycytidine in DNA + succinate + CO2 + H(+). Functionally, dioxygenase that plays a key role in active DNA demethylation, by catalyzing the sequential oxidation of the modified genomic base 5-methylcytosine (5mC) into 5-hydroxymethylcytosine (5hmC), 5-formylcytosine (5fC), and 5-carboxylcytosine (5caC). In addition to its role in DNA demethylation, plays a more general role in chromatin regulation by recruiting histone modifying protein complexes to alter histone marks and chromatin accessibility, leading to both activation and repression of gene expression. Plays therefore a role in many biological processes, including stem cell maintenance, T- and B-cell development, inflammation regulation, genomic imprinting, neural activity or DNA repair. Involved in the balance between pluripotency and lineage commitment of cells and plays a role in embryonic stem cells maintenance and inner cell mass cell specification. Together with QSER1, plays an essential role in the protection and maintenance of transcriptional and developmental programs to inhibit the binding of DNMT3A/3B and therefore de novo methylation. May play a role in pancreatic beta-cell specification during development. In this context, may function as an upstream epigenetic regulator of PAX4 presumably through direct recruitment by FOXA2 to a PAX4 enhancer to preserve its unmethylated status, thereby potentiating PAX4 expression to adopt beta-cell fate during endocrine lineage commitment. Under DNA hypomethylation conditions, such as in female meiotic germ cells, may induce epigenetic reprogramming of pericentromeric heterochromatin (PCH), the constitutive heterochromatin of pericentromeric regions. PCH forms chromocenters in the interphase nucleus and chromocenters cluster at the prophase of meiosis. In this context, may also be essential for chromocenter clustering in a catalytic activity-independent manner, possibly through the recruitment polycomb repressive complex 1 (PRC1) to the chromocenters. During embryonic development, may be required for normal meiotic progression in oocytes and meiotic gene activation. Binds preferentially to DNA containing cytidine-phosphate-guanosine (CpG) dinucleotides over CpH (H=A, T, and C), hemimethylated-CpG and hemimethylated-hydroxymethyl-CpG. In terms of biological role, dioxygenase that plays a key role in active DNA demethylation. Binds to promoters, particularly to those with high CG content. In hippocampal neurons, isoform 1 regulates the expression of a unique subset of genes compared to isoform 2, although some overlap exists between both isoforms, hence differentially regulates excitatory synaptic transmission. In hippocampal neuron cell cultures, isoform 1 controls both miniature excitatory postsynaptic current amplitude and frequency. Isoform 1 may regulate genes involved in hippocampal-dependent memory, leading to positive regulation of memory, contrary to isoform 2 that may decrease memory. Dioxygenase that plays a key role in active DNA demethylation. As isoform 1, binds to promoters, particularly to those with high CG content, however displays reduced global chromatin affinity compared with isoform 1, leading to decreased global DNA demethylation compared with isoform 1. Contrary to isoform 1, isoform 2 localizes during S phase to sites of ongoing DNA replication in heterochromatin, causing a significant de novo 5hmC formation, globally, and more so in heterochromatin, including LINE 1 interspersed DNA repeats leading to their activation. In hippocampal neurons, isoform 2 regulates the expression of a unique subset of genes compared to isoform 1, although some overlap between both isoforms, hence differentially regulates excitatory synaptic transmission. In hippocampal neuron cell cultures, isoform 2 controls miniature excitatory postsynaptic current frequency, but not amplitude. Isoform 2 may regulate genes involved in hippocampal-dependent memory, leading to negative regulation of memory, contrary to isoform 1 that may improve memory. In immature and partially differentiated gonadotrope cells, directly represses luteinizing hormone gene LHB expression and does not catalyze 5hmC at the gene promoter. The polypeptide is Methylcytosine dioxygenase TET1 (Homo sapiens (Human)).